Reading from the N-terminus, the 63-residue chain is Small ribosomal subunit protein eS30B (63 aa).

The disordered stretch occupies residues 1–35 (MAKVHGSLARAGKVKSQTPKVEKTEKPKKPKGRAY). The residue at position 16 (S16) is a Phosphoserine. Residue T48 is modified to Phosphothreonine.

This sequence belongs to the eukaryotic ribosomal protein eS30 family. Component of the small ribosomal subunit (SSU). Mature yeast ribosomes consist of a small (40S) and a large (60S) subunit. The 40S small subunit contains 1 molecule of ribosomal RNA (18S rRNA) and 33 different proteins (encoded by 57 genes). The large 60S subunit contains 3 rRNA molecules (25S, 5.8S and 5S rRNA) and 46 different proteins (encoded by 81 genes).

It is found in the cytoplasm. Its function is as follows. Component of the ribosome, a large ribonucleoprotein complex responsible for the synthesis of proteins in the cell. The small ribosomal subunit (SSU) binds messenger RNAs (mRNAs) and translates the encoded message by selecting cognate aminoacyl-transfer RNA (tRNA) molecules. The large subunit (LSU) contains the ribosomal catalytic site termed the peptidyl transferase center (PTC), which catalyzes the formation of peptide bonds, thereby polymerizing the amino acids delivered by tRNAs into a polypeptide chain. The nascent polypeptides leave the ribosome through a tunnel in the LSU and interact with protein factors that function in enzymatic processing, targeting, and the membrane insertion of nascent chains at the exit of the ribosomal tunnel. The polypeptide is Small ribosomal subunit protein eS30B (Saccharomyces cerevisiae (strain ATCC 204508 / S288c) (Baker's yeast)).